Reading from the N-terminus, the 68-residue chain is Probable tautomerase Cj0270 (68 aa).

Catalysis depends on Pro2, which acts as the Proton acceptor; via imino nitrogen.

The protein belongs to the 4-oxalocrotonate tautomerase family.

In Campylobacter jejuni subsp. jejuni serotype O:2 (strain ATCC 700819 / NCTC 11168), this protein is Probable tautomerase Cj0270.